Reading from the N-terminus, the 457-residue chain is Argininosuccinate lyase (457 aa).

This sequence belongs to the lyase 1 family. Argininosuccinate lyase subfamily.

It localises to the cytoplasm. The catalysed reaction is 2-(N(omega)-L-arginino)succinate = fumarate + L-arginine. It participates in amino-acid biosynthesis; L-arginine biosynthesis; L-arginine from L-ornithine and carbamoyl phosphate: step 3/3. This chain is Argininosuccinate lyase, found in Klebsiella pneumoniae subsp. pneumoniae (strain ATCC 700721 / MGH 78578).